The primary structure comprises 232 residues: Orotidine 5'-phosphate decarboxylase (232 aa).

Residues D13, K35, D62 to T71, T121, R182, Q191, G211, and R212 each bind substrate. The active-site Proton donor is K64.

The protein belongs to the OMP decarboxylase family. Type 1 subfamily. Homodimer.

The enzyme catalyses orotidine 5'-phosphate + H(+) = UMP + CO2. It functions in the pathway pyrimidine metabolism; UMP biosynthesis via de novo pathway; UMP from orotate: step 2/2. Catalyzes the decarboxylation of orotidine 5'-monophosphate (OMP) to uridine 5'-monophosphate (UMP). This chain is Orotidine 5'-phosphate decarboxylase, found in Acinetobacter baumannii (strain ACICU).